Reading from the N-terminus, the 514-residue chain is Ribonuclease Y (514 aa).

The helical transmembrane segment at 3-23 threads the bilayer; it reads VLWMVLGLAIGIAVGAAAGYI. One can recognise a KH domain in the interval 203–266; sequence TVKAVELPSD…EVARIAMERL (64 aa). Residues 330–423 enclose the HD domain; it reads VLAHSVEVAN…VATADAVSAA (94 aa).

This sequence belongs to the RNase Y family.

The protein resides in the cell membrane. Functionally, endoribonuclease that initiates mRNA decay. The sequence is that of Ribonuclease Y from Rubrobacter xylanophilus (strain DSM 9941 / JCM 11954 / NBRC 16129 / PRD-1).